An 853-amino-acid chain; its full sequence is Dynein axonemal assembly factor 5 (853 aa).

A2 carries the N-acetylalanine modification. HEAT repeat units lie at residues 69 to 107 (GPWA…RAAR), 200 to 238 (HMQS…FGSG), 240 to 276 (SVDD…NLRD), 278 to 316 (YSFL…QWQQ), 374 to 412 (RVKA…DEEK), 597 to 636 (GEAL…RPKD), 694 to 732 (QEAQ…NSGD), 736 to 774 (PEKF…CIES), and 782 to 820 (QSSV…LFPD).

The protein belongs to the DNAAF5 family. In terms of assembly, interacts with DNAI2; probably involved in outer arm dynein assembly. Expressed in ciliated cells including ependymal cells lining the lateral ventricles and multiciliated epithelium of oviduct ampulla.

It localises to the cytoplasm. The protein localises to the cytoplasmic granule. Its function is as follows. Cytoplasmic protein involved in the delivery of the dynein machinery to the motile cilium. It is required for the assembly of the axonemal dynein inner and outer arms, two structures attached to the peripheral outer doublet A microtubule of the axoneme, that play a crucial role in cilium motility. In Mus musculus (Mouse), this protein is Dynein axonemal assembly factor 5.